Consider the following 212-residue polypeptide: Imidazole glycerol phosphate synthase subunit HisH (212 aa).

The region spanning 3–208 (RIVIVDYGMG…GRMVCDLIST (206 aa)) is the Glutamine amidotransferase type-1 domain. Catalysis depends on C81, which acts as the Nucleophile. Catalysis depends on residues H183 and E185.

Heterodimer of HisH and HisF.

The protein resides in the cytoplasm. The catalysed reaction is 5-[(5-phospho-1-deoxy-D-ribulos-1-ylimino)methylamino]-1-(5-phospho-beta-D-ribosyl)imidazole-4-carboxamide + L-glutamine = D-erythro-1-(imidazol-4-yl)glycerol 3-phosphate + 5-amino-1-(5-phospho-beta-D-ribosyl)imidazole-4-carboxamide + L-glutamate + H(+). It catalyses the reaction L-glutamine + H2O = L-glutamate + NH4(+). It functions in the pathway amino-acid biosynthesis; L-histidine biosynthesis; L-histidine from 5-phospho-alpha-D-ribose 1-diphosphate: step 5/9. In terms of biological role, IGPS catalyzes the conversion of PRFAR and glutamine to IGP, AICAR and glutamate. The HisH subunit catalyzes the hydrolysis of glutamine to glutamate and ammonia as part of the synthesis of IGP and AICAR. The resulting ammonia molecule is channeled to the active site of HisF. This Symbiobacterium thermophilum (strain DSM 24528 / JCM 14929 / IAM 14863 / T) protein is Imidazole glycerol phosphate synthase subunit HisH.